A 111-amino-acid chain; its full sequence is Cytochrome b-c1 complex subunit 7 (111 aa).

Position 2 is an N-acetylalanine (alanine 2). Position 12 is an N6-acetyllysine; alternate (lysine 12). At lysine 12 the chain carries N6-succinyllysine; alternate. Lysine 19 is subject to N6-acetyllysine. An N6-acetyllysine; alternate modification is found at lysine 78. The residue at position 78 (lysine 78) is an N6-succinyllysine; alternate. An N6-acetyllysine mark is found at lysine 83 and lysine 96.

Belongs to the UQCRB/QCR7 family. In terms of assembly, component of the ubiquinol-cytochrome c oxidoreductase (cytochrome b-c1 complex, complex III, CIII), a multisubunit enzyme composed of 11 subunits. The complex is composed of 3 respiratory subunits cytochrome b, cytochrome c1 and Rieske protein UQCRFS1, 2 core protein subunits UQCRC1/QCR1 and UQCRC2/QCR2, and 6 low-molecular weight protein subunits UQCRH/QCR6, UQCRB/QCR7, UQCRQ/QCR8, UQCR10/QCR9, UQCR11/QCR10 and subunit 9, the cleavage product of Rieske protein UQCRFS1. The complex exists as an obligatory dimer and forms supercomplexes (SCs) in the inner mitochondrial membrane with NADH-ubiquinone oxidoreductase (complex I, CI) and cytochrome c oxidase (complex IV, CIV), resulting in different assemblies (supercomplex SCI(1)III(2)IV(1) and megacomplex MCI(2)III(2)IV(2)).

Its subcellular location is the mitochondrion inner membrane. Component of the ubiquinol-cytochrome c oxidoreductase, a multisubunit transmembrane complex that is part of the mitochondrial electron transport chain which drives oxidative phosphorylation. The respiratory chain contains 3 multisubunit complexes succinate dehydrogenase (complex II, CII), ubiquinol-cytochrome c oxidoreductase (cytochrome b-c1 complex, complex III, CIII) and cytochrome c oxidase (complex IV, CIV), that cooperate to transfer electrons derived from NADH and succinate to molecular oxygen, creating an electrochemical gradient over the inner membrane that drives transmembrane transport and the ATP synthase. The cytochrome b-c1 complex catalyzes electron transfer from ubiquinol to cytochrome c, linking this redox reaction to translocation of protons across the mitochondrial inner membrane, with protons being carried across the membrane as hydrogens on the quinol. In the process called Q cycle, 2 protons are consumed from the matrix, 4 protons are released into the intermembrane space and 2 electrons are passed to cytochrome c. The polypeptide is Cytochrome b-c1 complex subunit 7 (UQCRB) (Pongo abelii (Sumatran orangutan)).